Here is a 335-residue protein sequence, read N- to C-terminus: Pro-cathepsin H (335 aa).

The first 22 residues, 1-22, serve as a signal peptide directing secretion; that stretch reads MWATLPLLCAGAWLLGVPVCGA. Positions 23-97 are cleaved as a propeptide — activation peptide; that stretch reads AELCVNSLEK…AEIKHKYLWS (75 aa). An N-linked (GlcNAc...) asparagine glycan is attached at Asn-101. Cystine bridges form between Cys-102-Cys-327, Cys-138-Cys-181, Cys-172-Cys-214, and Cys-272-Cys-322. Positions 106-115 are excised as a propeptide; it reads KSNYLRGTGP. The active site involves Cys-141. Asn-230 carries an N-linked (GlcNAc...) asparagine glycan. Catalysis depends on residues His-281 and Asn-301.

Belongs to the peptidase C1 family. As to quaternary structure, composed of a mini chain and a large chain. The large chain may be split into heavy and light chain. All chains are held together by disulfide bonds.

The protein localises to the lysosome. The enzyme catalyses Hydrolysis of proteins, acting as an aminopeptidase (notably, cleaving Arg-|-Xaa bonds) as well as an endopeptidase.. Important for the overall degradation of proteins in lysosomes. The chain is Pro-cathepsin H (CTSH) from Homo sapiens (Human).